The chain runs to 205 residues: Probable NAD(P)H dehydrogenase (quinone) FQR1-like 1 (205 aa).

The region spanning 5–192 (VYIVYYSMYG…GQAFHQGKYI (188 aa)) is the Flavodoxin-like domain. FMN is bound by residues 11-15 (SMYGH), 112-165 (IFYS…SPYG), and His136. Tyr13 contributes to the NAD(+) binding site.

Belongs to the WrbA family. FMN is required as a cofactor.

The protein resides in the cell membrane. It carries out the reaction a quinone + NADH + H(+) = a quinol + NAD(+). It catalyses the reaction a quinone + NADPH + H(+) = a quinol + NADP(+). In terms of biological role, catalyzes the transfer of electrons from NADH and NADPH to reduce quinone to the hydroquinone state. In Arabidopsis thaliana (Mouse-ear cress), this protein is Probable NAD(P)H dehydrogenase (quinone) FQR1-like 1.